We begin with the raw amino-acid sequence, 285 residues long: Putative cuticle collagen 75 (285 aa).

Triple-helical region regions lie at residues 87-116 (GRIG…PGEL) and 133-261 (GPKG…PGLD). Over residues 207 to 231 (PGAPGIPGEEGLSGPTGQPGSPGSI) the composition is skewed to low complexity. The disordered stretch occupies residues 207-257 (PGAPGIPGEEGLSGPTGQPGSPGSIGAMGYEGAYGDRGEPGPPGPIGRRGG).

The protein belongs to the cuticular collagen family. As to quaternary structure, collagen polypeptide chains are complexed within the cuticle by disulfide bonds and other types of covalent cross-links.

In terms of biological role, nematode cuticles are composed largely of collagen-like proteins. The cuticle functions both as an exoskeleton and as a barrier to protect the worm from its environment. This is Putative cuticle collagen 75 (col-75) from Caenorhabditis elegans.